Here is a 616-residue protein sequence, read N- to C-terminus: Homeodomain-interacting protein kinase 4 (616 aa).

Residues 11 to 347 (YDIIEVLGKG…PSAALRHPFV (337 aa)) enclose the Protein kinase domain. ATP-binding positions include 17–25 (LGKGTFGEV) and Lys40. Asp136 functions as the Proton acceptor in the catalytic mechanism. The segment at 487–616 (HKARKAPAGS…SFLQHVGGHH (130 aa)) is disordered. The segment covering 497 to 512 (KSDSNFSNLIRLSQAS) has biased composition (polar residues). Ser512 is subject to Phosphoserine. Residues 542-560 (REGDGPSIKDRPMDAERSG) are compositionally biased toward basic and acidic residues.

The protein belongs to the protein kinase superfamily. CMGC Ser/Thr protein kinase family. HIPK subfamily. Autophosphorylated.

It localises to the cytoplasm. It catalyses the reaction L-seryl-[protein] + ATP = O-phospho-L-seryl-[protein] + ADP + H(+). The catalysed reaction is L-threonyl-[protein] + ATP = O-phospho-L-threonyl-[protein] + ADP + H(+). Protein kinase that phosphorylates TP53, and thus induces TP53 repression of BIRC5 promoter. May act as a corepressor of transcription factors (Potential). The polypeptide is Homeodomain-interacting protein kinase 4 (Hipk4) (Rattus norvegicus (Rat)).